A 155-amino-acid polypeptide reads, in one-letter code: Large-conductance mechanosensitive channel (155 aa).

A run of 2 helical transmembrane segments spans residues 25–45 (VLDL…VTSL) and 98–118 (GDFI…FLIV).

It belongs to the MscL family. In terms of assembly, homopentamer.

It is found in the cell inner membrane. In terms of biological role, channel that opens in response to stretch forces in the membrane lipid bilayer. May participate in the regulation of osmotic pressure changes within the cell. The protein is Large-conductance mechanosensitive channel of Novosphingobium aromaticivorans (strain ATCC 700278 / DSM 12444 / CCUG 56034 / CIP 105152 / NBRC 16084 / F199).